Here is a 198-residue protein sequence, read N- to C-terminus: Na(+)-translocating NADH-quinone reductase subunit E (198 aa).

6 helical membrane-spanning segments follow: residues 11–31, 35–55, 77–97, 110–130, 140–160, and 176–196; these read AVFI…FLAV, VSTA…AVPV, FLNF…LEMV, GIFL…SFMV, IVYG…LAGL, and LGIT…FSGI.

It belongs to the NqrDE/RnfAE family. As to quaternary structure, composed of six subunits; NqrA, NqrB, NqrC, NqrD, NqrE and NqrF.

The protein resides in the cell inner membrane. The catalysed reaction is a ubiquinone + n Na(+)(in) + NADH + H(+) = a ubiquinol + n Na(+)(out) + NAD(+). Its function is as follows. NQR complex catalyzes the reduction of ubiquinone-1 to ubiquinol by two successive reactions, coupled with the transport of Na(+) ions from the cytoplasm to the periplasm. NqrA to NqrE are probably involved in the second step, the conversion of ubisemiquinone to ubiquinol. In Haemophilus influenzae (strain 86-028NP), this protein is Na(+)-translocating NADH-quinone reductase subunit E.